The primary structure comprises 237 residues: Leucyl/phenylalanyl-tRNA--protein transferase (237 aa).

Belongs to the L/F-transferase family.

It localises to the cytoplasm. It carries out the reaction N-terminal L-lysyl-[protein] + L-leucyl-tRNA(Leu) = N-terminal L-leucyl-L-lysyl-[protein] + tRNA(Leu) + H(+). It catalyses the reaction N-terminal L-arginyl-[protein] + L-leucyl-tRNA(Leu) = N-terminal L-leucyl-L-arginyl-[protein] + tRNA(Leu) + H(+). The enzyme catalyses L-phenylalanyl-tRNA(Phe) + an N-terminal L-alpha-aminoacyl-[protein] = an N-terminal L-phenylalanyl-L-alpha-aminoacyl-[protein] + tRNA(Phe). Functionally, functions in the N-end rule pathway of protein degradation where it conjugates Leu, Phe and, less efficiently, Met from aminoacyl-tRNAs to the N-termini of proteins containing an N-terminal arginine or lysine. This Photobacterium profundum (strain SS9) protein is Leucyl/phenylalanyl-tRNA--protein transferase.